Reading from the N-terminus, the 139-residue chain is Holo-[acyl-carrier-protein] synthase (139 aa).

Mg(2+) contacts are provided by aspartate 8 and glutamate 57.

The protein belongs to the P-Pant transferase superfamily. AcpS family. It depends on Mg(2+) as a cofactor.

It localises to the cytoplasm. The catalysed reaction is apo-[ACP] + CoA = holo-[ACP] + adenosine 3',5'-bisphosphate + H(+). In terms of biological role, transfers the 4'-phosphopantetheine moiety from coenzyme A to a Ser of acyl-carrier-protein. This chain is Holo-[acyl-carrier-protein] synthase, found in Sinorhizobium medicae (strain WSM419) (Ensifer medicae).